Reading from the N-terminus, the 104-residue chain is uncharacterized protein (104 aa).

The chain crosses the membrane as a helical span at residues Gly-80 to Leu-98.

The protein resides in the membrane. This is an uncharacterized protein from Saccharomyces cerevisiae (strain ATCC 204508 / S288c) (Baker's yeast).